Here is a 312-residue protein sequence, read N- to C-terminus: Isethionate sulfite-lyase activating enzyme (312 aa).

The Radical SAM core domain maps to 22 to 309; the sequence is HDGPGIRTIV…VDETRGAVTE (288 aa). Residues cysteine 36, cysteine 40, cysteine 43, cysteine 62, cysteine 65, cysteine 68, cysteine 72, cysteine 92, cysteine 95, cysteine 100, and cysteine 104 each coordinate [4Fe-4S] cluster. 42–44 provides a ligand contact to S-adenosyl-L-methionine; it reads WCS. 4Fe-4S ferredoxin-type domains follow at residues 53–82 and 83–115; these read PQVA…VNED and GTLS…YGEN. S-adenosyl-L-methionine is bound by residues glycine 144, 193-195, and histidine 267; that span reads DVK.

It belongs to the organic radical-activating enzymes family. As to quaternary structure, monomer. Requires [4Fe-4S] cluster as cofactor.

It carries out the reaction glycyl-[protein] + reduced [flavodoxin] + S-adenosyl-L-methionine = glycin-2-yl radical-[protein] + semiquinone [flavodoxin] + 5'-deoxyadenosine + L-methionine + H(+). It functions in the pathway organosulfur degradation; alkanesulfonate degradation. Its function is as follows. Involved in an anaerobic respiration pathway that converts the sulfonate taurine (2-aminoethanesulfonate) to ammonia, acetate and sulfide. Catalyzes activation of the isethionate sulfite-lyase IslA under anaerobic conditions by generation of an organic free radical on a glycine residue, via a homolytic cleavage of S-adenosyl-L-methionine (SAM). The protein is Isethionate sulfite-lyase activating enzyme of Bilophila wadsworthia (strain 3_1_6).